The primary structure comprises 448 residues: Na(+)-translocating NADH-quinone reductase subunit A (448 aa).

It belongs to the NqrA family. In terms of assembly, composed of six subunits; NqrA, NqrB, NqrC, NqrD, NqrE and NqrF.

The enzyme catalyses a ubiquinone + n Na(+)(in) + NADH + H(+) = a ubiquinol + n Na(+)(out) + NAD(+). In terms of biological role, NQR complex catalyzes the reduction of ubiquinone-1 to ubiquinol by two successive reactions, coupled with the transport of Na(+) ions from the cytoplasm to the periplasm. NqrA to NqrE are probably involved in the second step, the conversion of ubisemiquinone to ubiquinol. The sequence is that of Na(+)-translocating NADH-quinone reductase subunit A from Glaesserella parasuis serovar 5 (strain SH0165) (Haemophilus parasuis).